Reading from the N-terminus, the 586-residue chain is MSVHQIRKRAVLPPIICRSDKEFLESMQRYIITETERLGYNEEGPADEYYIIYRNVFDKVIEHVTAYKSILTSIKKEYDAFIETIKKGRRTAFCLHGKLKGLAAEPTALVYHRKRTIQLEAKMRIIENNSSKIQSQIDQIKQSRAAYDTKEVKYCTFSKDPSKPIPGMTLQESMNLDALTKYMKHLEDKYAEIKQAMLIKYVPAQRKSDLDEEMIVLLKRRDVAENLNRKLQFCHQRLQIISQALTSWVKSDMSSPFQDFVEQIQKTKYLQGDQGIVEELMEDDPHRAKEAEIMLHYIERFNELISLGEYEKAACYAANSPRRILRNIGTMNTFKAVGKIRGKPLPLLLFFEALFITSHAFRCPVDAALTLEGIKCGLSEKRLDLVINWVTQQRLTFSEEAGDVICDYGEQDTYNKAKCLALAQIIYSECGLHKKAILCLCKQGQTHRVMEYIQQFKDFTTDDLLQLLMSCPQIELIQCLTKELNEKQTSLSFGLAILHLFSIDKKKIGIKLLQEINKGGIDAVESLMINDSFCSTERWQEVANICSQNGFDKLSNDIMSILRSQAAVTEISEEDDAVNLMEHVFW.

Residues 174–232 (MNLDALTKYMKHLEDKYAEIKQAMLIKYVPAQRKSDLDEEMIVLLKRRDVAENLNRKLQ) adopt a coiled-coil conformation.

This Macaca fascicularis (Crab-eating macaque) protein is Clathrin heavy chain linker domain-containing protein 1 (CLHC1).